Consider the following 445-residue polypeptide: Ribosomal protein uS12 methylthiotransferase RimO (445 aa).

The MTTase N-terminal domain maps to 13 to 123 (PRVGFVSLGC…VMAAIHHHLP (111 aa)). Positions 22, 58, 87, 154, 158, and 161 each coordinate [4Fe-4S] cluster. The 238-residue stretch at 140–377 (LTPKHYAYLK…MQQQEIISKQ (238 aa)) folds into the Radical SAM core domain. Residues 380–445 (AVKKGQQLRV…DIHDLWTEKI (66 aa)) enclose the TRAM domain.

Belongs to the methylthiotransferase family. RimO subfamily. [4Fe-4S] cluster serves as cofactor.

The protein localises to the cytoplasm. The catalysed reaction is L-aspartate(89)-[ribosomal protein uS12]-hydrogen + (sulfur carrier)-SH + AH2 + 2 S-adenosyl-L-methionine = 3-methylsulfanyl-L-aspartate(89)-[ribosomal protein uS12]-hydrogen + (sulfur carrier)-H + 5'-deoxyadenosine + L-methionine + A + S-adenosyl-L-homocysteine + 2 H(+). In terms of biological role, catalyzes the methylthiolation of an aspartic acid residue of ribosomal protein uS12. The sequence is that of Ribosomal protein uS12 methylthiotransferase RimO from Nitrosomonas eutropha (strain DSM 101675 / C91 / Nm57).